We begin with the raw amino-acid sequence, 659 residues long: Exocyst complex component 5 (659 aa).

Residues 1 to 58 (MRFEEEIGSLQMLCDQFQNKINTLEKQMNEEKKDYVQKLHRLHEKNGEAIDKMKQLDH) adopt a coiled-coil conformation.

This sequence belongs to the SEC10 family. The exocyst complex is composed of sec-3/exoc1, sec-5/exoc2, sec-6/exoc3, sec-8/exoc4, sec-10/exoc5, sec-15/exoc6, exo-70/exoc7 and exo-84/exoc8.

Component of the exocyst complex involved in the docking of exocytic vesicles with fusion sites on the plasma membrane. The chain is Exocyst complex component 5 (sec-10) from Caenorhabditis elegans.